Reading from the N-terminus, the 246-residue chain is Uridylate kinase (246 aa).

10-13 (KLSG) lines the ATP pocket. Glycine 52 serves as a coordination point for UMP. 2 residues coordinate ATP: glycine 53 and arginine 57. UMP contacts are provided by residues aspartate 72 and 133–140 (TGNPFFTT). ATP-binding residues include threonine 160, tyrosine 166, and aspartate 169.

The protein belongs to the UMP kinase family. Homohexamer.

Its subcellular location is the cytoplasm. It catalyses the reaction UMP + ATP = UDP + ADP. It functions in the pathway pyrimidine metabolism; CTP biosynthesis via de novo pathway; UDP from UMP (UMPK route): step 1/1. Its activity is regulated as follows. Inhibited by UTP. Its function is as follows. Catalyzes the reversible phosphorylation of UMP to UDP. This Halorhodospira halophila (strain DSM 244 / SL1) (Ectothiorhodospira halophila (strain DSM 244 / SL1)) protein is Uridylate kinase.